Reading from the N-terminus, the 866-residue chain is FHIP family protein v1g243165 (866 aa).

Disordered stretches follow at residues 739–761 (RDGP…ASTS) and 781–814 (GSTA…ESQT). Residues 751–761 (SIGSIGSASTS) show a composition bias toward low complexity.

Belongs to the FHIP family.

This Nematostella vectensis (Starlet sea anemone) protein is FHIP family protein v1g243165.